Here is a 238-residue protein sequence, read N- to C-terminus: Pyridoxine 5'-phosphate synthase (238 aa).

A 3-amino-2-oxopropyl phosphate-binding site is contributed by N9. 11 to 12 (DH) provides a ligand contact to 1-deoxy-D-xylulose 5-phosphate. Position 20 (R20) interacts with 3-amino-2-oxopropyl phosphate. H45 (proton acceptor) is an active-site residue. Residues R47 and H52 each contribute to the 1-deoxy-D-xylulose 5-phosphate site. E72 (proton acceptor) is an active-site residue. T102 contributes to the 1-deoxy-D-xylulose 5-phosphate binding site. H189 acts as the Proton donor in catalysis. Residues G190 and 211–212 (GH) contribute to the 3-amino-2-oxopropyl phosphate site.

This sequence belongs to the PNP synthase family. In terms of assembly, homooctamer; tetramer of dimers.

It localises to the cytoplasm. It catalyses the reaction 3-amino-2-oxopropyl phosphate + 1-deoxy-D-xylulose 5-phosphate = pyridoxine 5'-phosphate + phosphate + 2 H2O + H(+). Its pathway is cofactor biosynthesis; pyridoxine 5'-phosphate biosynthesis; pyridoxine 5'-phosphate from D-erythrose 4-phosphate: step 5/5. Catalyzes the complicated ring closure reaction between the two acyclic compounds 1-deoxy-D-xylulose-5-phosphate (DXP) and 3-amino-2-oxopropyl phosphate (1-amino-acetone-3-phosphate or AAP) to form pyridoxine 5'-phosphate (PNP) and inorganic phosphate. The sequence is that of Pyridoxine 5'-phosphate synthase from Ehrlichia ruminantium (strain Gardel).